Consider the following 367-residue polypeptide: MKEPLDLSKYAVRTDLAVEAHQMLQERQQENTGIQGVIIKEREEEGMTITKVTIDESASEAMGKKAGNYLTLEVQGIRQQDTELQRKVERIFAKEFAYFLEEIGVKKEASCLIVGLGNWNVTPDALGPIVVENVLVTRHLFKLQPESVEDGYRPVSAIRPGVMGITGIETSDVIFGIIEKTKPDFVIAIDALAARSIERVNSTIQISDTGIHPGSGVGNKRKELSQETLGIPVIAIGVPTVVDAVSITSDTIDFILKHFGREMKEGDKPSRSLLPAGFTFGEKKKLTEEDMPDEKSRNMFLGAVGMLEEEEKRKLIYEVLAPLGHNLMVTPKEVDAFIEDMANVIASGLNAALHHQIDQDNTGAYTH.

A propeptide spanning residues Met-1–Asp-15 is cleaved from the precursor.

The protein belongs to the peptidase A25 family. In terms of assembly, homotetramer. Autoproteolytically processed. The inactive tetrameric zymogen termed p46 autoprocesses to a smaller form termed p41, which is active only during spore germination.

It carries out the reaction Endopeptidase action with P4 Glu or Asp, P1 preferably Glu &gt; Asp, P1' hydrophobic and P2' Ala.. Its function is as follows. Initiates the rapid degradation of small, acid-soluble proteins during spore germination. This Bacillus cytotoxicus (strain DSM 22905 / CIP 110041 / 391-98 / NVH 391-98) protein is Germination protease.